The primary structure comprises 382 residues: Na(+)/H(+) antiporter NhaA 2 (382 aa).

Transmembrane regions (helical) follow at residues 7–27, 58–78, 94–114, 124–144, 153–173, 178–198, 199–219, 255–275, 291–311, 327–347, and 361–381; these read MVLS…LALL, LDLW…GLEL, SLPI…FIAI, GWAI…MLLG, LFLL…IALF, LSAL…LLNY, YHIT…IAML, NPWV…GIDI, IILG…FIAI, FYGI…IDGL, and LAIL…LKIV.

Belongs to the NhaA Na(+)/H(+) (TC 2.A.33) antiporter family.

The protein resides in the cell inner membrane. It carries out the reaction Na(+)(in) + 2 H(+)(out) = Na(+)(out) + 2 H(+)(in). Its function is as follows. Na(+)/H(+) antiporter that extrudes sodium in exchange for external protons. The polypeptide is Na(+)/H(+) antiporter NhaA 2 (Campylobacter jejuni (strain RM1221)).